The following is a 296-amino-acid chain: mRNA 3'-end-processing protein RNA15 (296 aa).

Residues 18–96 enclose the RRM domain; sequence RVVYLGSIPY…RFLKCGYSSN (79 aa). Residues 99-140 are disordered; the sequence is ISGVSQQQQQQYNNINGNNNNNGNNNNNSNGPDFQNSGNANF. Low complexity predominate over residues 100–135; the sequence is SGVSQQQQQQYNNINGNNNNNGNNNNNSNGPDFQNS.

In terms of assembly, component of the CFIA complex, which is composed of RNA14, RNA15, PCF11 and CLP1. Interacts directly with RNA14. Interacts with polyadenylate-binding protein PAB1.

Its subcellular location is the nucleus. RNA-binding component of the cleavage factor IA (CFIA) complex, which is involved in the endonucleolytic cleavage during polyadenylation-dependent pre-mRNA 3'-end formation and cooperates with the cleavage factor NAB4/CFIB and the cleavage and polyadenylation factor (CPF) complex. Binds to A-rich RNA sequence elements. This chain is mRNA 3'-end-processing protein RNA15 (RNA15), found in Saccharomyces cerevisiae (strain ATCC 204508 / S288c) (Baker's yeast).